We begin with the raw amino-acid sequence, 361 residues long: 4-oxalomesaconate tautomerase (361 aa).

It belongs to the PrpF family.

It catalyses the reaction (1E)-4-oxobut-1-ene-1,2,4-tricarboxylate = 4-carboxy-2-hydroxy-cis,cis-muconate. Catalyzes the tautomerization of the 4-oxalomesaconic acid keto (OMAketo) generated by GalA dioxygenase to 4-oxalomesaconic acid enol (OMAenol). Mediates the second step in gallate degradation pathway. The sequence is that of 4-oxalomesaconate tautomerase (galD) from Pseudomonas putida (strain ATCC 47054 / DSM 6125 / CFBP 8728 / NCIMB 11950 / KT2440).